The chain runs to 142 residues: AP-2 complex subunit sigma (142 aa).

This sequence belongs to the adaptor complexes small subunit family. As to quaternary structure, adaptor protein complex 2 (AP-2) is a heterotetramer composed of two large adaptins (alpha-type and beta-type subunits), a medium adaptin (mu-type subunit AP50) and a small adaptin (sigma-type subunit AP17).

It localises to the cell membrane. Its subcellular location is the membrane. It is found in the coated pit. In terms of biological role, component of the adaptor complexes which link clathrin to receptors in coated vesicles. Clathrin-associated protein complexes are believed to interact with the cytoplasmic tails of membrane proteins, leading to their selection and concentration. The polypeptide is AP-2 complex subunit sigma (ap2s1) (Dictyostelium discoideum (Social amoeba)).